The chain runs to 425 residues: Serine--tRNA ligase (425 aa).

Residue 228-230 (TAE) coordinates L-serine. 259–261 (RSE) is an ATP binding site. Residue glutamate 282 participates in L-serine binding. An ATP-binding site is contributed by 346-349 (EIAS). Serine 382 is an L-serine binding site.

The protein belongs to the class-II aminoacyl-tRNA synthetase family. Type-1 seryl-tRNA synthetase subfamily. As to quaternary structure, homodimer. The tRNA molecule binds across the dimer.

It localises to the cytoplasm. The enzyme catalyses tRNA(Ser) + L-serine + ATP = L-seryl-tRNA(Ser) + AMP + diphosphate + H(+). It catalyses the reaction tRNA(Sec) + L-serine + ATP = L-seryl-tRNA(Sec) + AMP + diphosphate + H(+). It functions in the pathway aminoacyl-tRNA biosynthesis; selenocysteinyl-tRNA(Sec) biosynthesis; L-seryl-tRNA(Sec) from L-serine and tRNA(Sec): step 1/1. Catalyzes the attachment of serine to tRNA(Ser). Is also able to aminoacylate tRNA(Sec) with serine, to form the misacylated tRNA L-seryl-tRNA(Sec), which will be further converted into selenocysteinyl-tRNA(Sec). This Rickettsia peacockii (strain Rustic) protein is Serine--tRNA ligase.